Reading from the N-terminus, the 726-residue chain is MTNSKARYVLEPVQVTGTTFALNGTTLSYQFHVDEPSADLRSDHFGGSISGPIPVDPEPIVDGWTGMPDRVRREFPDQGRGDFRVPAFRIRQAEGHTVSAFRYREHEIVPGKEVSASGLPGVFGDAHDATTLIVRLVDPYSDLAAELKYTVFPKYDTVVRSASITNKSNSDVTIESLASLSVDFPFDELEMIGLRGDWAREAHRLRRKVDYGVQSFGSTTGFSSHLHNPFVALVHPSTTESQGEAWGFSLIYSGSFTINVEKSSQGLTRVSIGPSQLSWTLKPGETFDSPECVAVYSSTGIGGMSRSLHGLYRKHLMKSKFATEDRPVLLNSWEGLYFHIDQDRMYRLAQEAAALGVKLLVMDDGWFGDEHPRTSDDAGLGDWIPNPARFPDGLTPLVNRITALKVANSQRNMRFGIWVEPEMVNPRSTLYQQHPDWVLHAGNYPRTEQRNQLVLNMSLPEVQEFIISAMSEILNAADITYVKWDHNRGLAETPSPCANHAYMLGAYRVFDVLTTRFPNVIWEGCASGGGRFDPGILQYFPQVWTSDDSDAVERIFIQFGTSLAYPASAMGGHISSVPNHQTGRTTPLTFRAHVAMMCGSFGLELDPAHLTDSERRDIPGLIALAEKISPIVVKGDLWRLALPEDSNWPAALFLSENRTQGVLFFFQLAPMVNHSLPRVRLQGLEDGALYRVDGEGPYSGSMLMNLGLQYSFRGDYGSRLAFIERE.

Residues asparagine 23, asparagine 166, and asparagine 456 are each glycosylated (N-linked (GlcNAc...) asparagine). Aspartate 485 (nucleophile) is an active-site residue. Aspartate 547 serves as the catalytic Proton donor. N-linked (GlcNAc...) asparagine glycans are attached at residues asparagine 657 and asparagine 673.

This sequence belongs to the glycosyl hydrolase 36 family. In terms of assembly, homotetramer. Mg(2+) is required as a cofactor. Requires NAD(+) as cofactor.

The protein localises to the secreted. It catalyses the reaction Hydrolysis of terminal, non-reducing alpha-D-galactose residues in alpha-D-galactosides, including galactose oligosaccharides, galactomannans and galactolipids.. Functionally, hydrolyzes a variety of simple alpha-D-galactoside as well as more complex molecules such as oligosaccharides and polysaccharides. Not active on paranitrophenyl-alpha-galactoside and raffinose. The protein is Probable alpha-galactosidase G (aglG) of Emericella nidulans (strain FGSC A4 / ATCC 38163 / CBS 112.46 / NRRL 194 / M139) (Aspergillus nidulans).